The following is a 349-amino-acid chain: Isopentenyl-diphosphate delta-isomerase (349 aa).

Residue 9–10 (RK) coordinates substrate. FMN is bound by residues 65–67 (AMT), Ser95, and Asn124. Residue 95-97 (STH) participates in substrate binding. Gln154 contributes to the substrate binding site. Glu155 is a Mg(2+) binding site. FMN contacts are provided by residues Lys186, Ser211, Thr216, 262 to 264 (GLR), and 283 to 284 (SR).

Belongs to the IPP isomerase type 2 family. In terms of assembly, homooctamer. Dimer of tetramers. The cofactor is FMN. It depends on NADPH as a cofactor. Mg(2+) is required as a cofactor.

It is found in the cytoplasm. It carries out the reaction isopentenyl diphosphate = dimethylallyl diphosphate. In terms of biological role, involved in the biosynthesis of isoprenoids. Catalyzes the 1,3-allylic rearrangement of the homoallylic substrate isopentenyl (IPP) to its allylic isomer, dimethylallyl diphosphate (DMAPP). This is Isopentenyl-diphosphate delta-isomerase from Staphylococcus aureus.